Consider the following 159-residue polypeptide: Nucleotide-binding protein Psyr_4087 (159 aa).

This sequence belongs to the YajQ family.

Nucleotide-binding protein. The chain is Nucleotide-binding protein Psyr_4087 from Pseudomonas syringae pv. syringae (strain B728a).